Consider the following 234-residue polypeptide: Large ribosomal subunit protein uL1 (234 aa).

This sequence belongs to the universal ribosomal protein uL1 family. Part of the 50S ribosomal subunit.

Binds directly to 23S rRNA. The L1 stalk is quite mobile in the ribosome, and is involved in E site tRNA release. In terms of biological role, protein L1 is also a translational repressor protein, it controls the translation of the L11 operon by binding to its mRNA. The chain is Large ribosomal subunit protein uL1 from Sulfurovum sp. (strain NBC37-1).